A 284-amino-acid polypeptide reads, in one-letter code: Tryptophan 2,3-dioxygenase (284 aa).

Substrate contacts are provided by residues 53–57 (FIVQH), Tyr115, and Arg119. Position 242 (His242) interacts with heme. Residue Thr256 participates in substrate binding.

Belongs to the tryptophan 2,3-dioxygenase family. Homotetramer. It depends on heme as a cofactor.

The catalysed reaction is L-tryptophan + O2 = N-formyl-L-kynurenine. It participates in amino-acid degradation; L-tryptophan degradation via kynurenine pathway; L-kynurenine from L-tryptophan: step 1/2. In terms of biological role, heme-dependent dioxygenase that catalyzes the oxidative cleavage of the L-tryptophan (L-Trp) pyrrole ring and converts L-tryptophan to N-formyl-L-kynurenine. Catalyzes the oxidative cleavage of the indole moiety. This Bordetella pertussis (strain Tohama I / ATCC BAA-589 / NCTC 13251) protein is Tryptophan 2,3-dioxygenase.